Consider the following 413-residue polypeptide: Isobutyryl-CoA dehydrogenase, mitochondrial (413 aa).

Residues 1–20 (MAMLRSGYRRFGCLRAALKS) constitute a mitochondrion transit peptide. Lysine 48 is subject to N6-acetyllysine; alternate. Lysine 48 carries the post-translational modification N6-succinyllysine; alternate. Residues 156 to 165 (YCLTEPGSGS) and 189 to 191 (FIS) each bind FAD. Substrate is bound at residue serine 165. Lysine 211 carries the N6-succinyllysine modification. N6-acetyllysine is present on lysine 229. N6-succinyllysine is present on lysine 269. 272 to 275 (NGGR) contributes to the substrate binding site. Residues arginine 300, 310 to 311 (SQ), and 369 to 373 (QMHGG) each bind FAD. Catalysis depends on glutamate 396, which acts as the Proton acceptor. 398–400 (SNE) provides a ligand contact to FAD. Arginine 408 lines the substrate pocket.

It belongs to the acyl-CoA dehydrogenase family. Homotetramer, formed by a dimer of dimers. FAD serves as cofactor.

It is found in the mitochondrion. The enzyme catalyses 2-methylpropanoyl-CoA + oxidized [electron-transfer flavoprotein] + H(+) = 2-methylpropenoyl-CoA + reduced [electron-transfer flavoprotein]. It catalyses the reaction (2S)-2-methylbutanoyl-CoA + oxidized [electron-transfer flavoprotein] + H(+) = (2E)-2-methylbut-2-enoyl-CoA + reduced [electron-transfer flavoprotein]. It carries out the reaction propanoyl-CoA + oxidized [electron-transfer flavoprotein] + H(+) = acryloyl-CoA + reduced [electron-transfer flavoprotein]. It functions in the pathway amino-acid degradation; L-valine degradation. Its function is as follows. Isobutyryl-CoA dehydrogenase which catalyzes the conversion of 2-methylpropanoyl-CoA to (2E)-2-methylpropenoyl-CoA in the valine catabolic pathway. To a lesser extent, also able to catalyze the oxidation of (2S)-2-methylbutanoyl-CoA. The protein is Isobutyryl-CoA dehydrogenase, mitochondrial of Mus musculus (Mouse).